A 1066-amino-acid polypeptide reads, in one-letter code: Phosphatidylinositol 4-kinase PIK1 (1066 aa).

The 133-residue stretch at 1-133 folds into the PIK helical domain; that stretch reads MHKASSSKKS…GFQVARRVLN (133 aa). Phosphoserine is present on residues serine 10 and serine 236. Disordered regions lie at residues 218–240, 303–411, and 564–624; these read KKTSRSKRVSSNRSSTPTSPIDL, DGKN…KKAN, and NENR…LGDM. The segment covering 342–356 has biased composition (acidic residues); the sequence is NNEDETGGETEEDAD. 2 stretches are compositionally biased toward polar residues: residues 374-411 and 570-597; these read QPRTSSASSASLEGTPKLNRTNSQPLSRQAFKNSKKAN and STLTSNNTRSSVYDSNSFNNGASRNEGL. Position 384 is a phosphoserine (serine 384). Threonine 394 is subject to Phosphothreonine. 2 positions are modified to phosphoserine: serine 396 and serine 592. The segment covering 598–609 has biased composition (low complexity); sequence SSTSRSDSASTA. Residues 770-1049 enclose the PI3K/PI4K catalytic domain; that stretch reads ATKKERIRKT…FLIGKSLGSI (280 aa). A G-loop region spans residues 776-782; it reads IRKTSEY. The tract at residues 915 to 923 is catalytic loop; sequence QVKDRHNGN. The segment at 934–958 is activation loop; sequence HIDFGFMLSNSPGSVGFEAAPFKLT.

It belongs to the PI3/PI4-kinase family. Type III PI4K subfamily. In terms of assembly, interacts with FRQ1.

It localises to the nucleus. The protein localises to the golgi apparatus. The protein resides in the trans-Golgi network. It carries out the reaction a 1,2-diacyl-sn-glycero-3-phospho-(1D-myo-inositol) + ATP = a 1,2-diacyl-sn-glycero-3-phospho-(1D-myo-inositol 4-phosphate) + ADP + H(+). In terms of biological role, acts on phosphatidylinositol (PI) in the first committed step in the production of the second messenger inositol 1,4,5,-trisphosphate. PIK1 is part of a nuclear phosphoinositide cycle and could control cytokinesis through the actin cytoskeleton. Involved in the response to mating pheromone. The sequence is that of Phosphatidylinositol 4-kinase PIK1 from Saccharomyces cerevisiae (strain ATCC 204508 / S288c) (Baker's yeast).